Here is a 339-residue protein sequence, read N- to C-terminus: Dihydroorotate dehydrogenase (quinone) (339 aa).

Residues 62–66 (AGMDK) and Thr-86 each bind FMN. Lys-66 contributes to the substrate binding site. 111-115 (NRMGF) is a substrate binding site. Residues Asn-139 and Asn-172 each contribute to the FMN site. Asn-172 contributes to the substrate binding site. Ser-175 (nucleophile) is an active-site residue. Residue Asn-177 participates in substrate binding. Positions 217 and 245 each coordinate FMN. Residue 246–247 (NT) coordinates substrate. FMN is bound by residues Gly-268, Gly-297, and 318–319 (YS).

This sequence belongs to the dihydroorotate dehydrogenase family. Type 2 subfamily. As to quaternary structure, monomer. FMN serves as cofactor.

Its subcellular location is the cell membrane. It catalyses the reaction (S)-dihydroorotate + a quinone = orotate + a quinol. It functions in the pathway pyrimidine metabolism; UMP biosynthesis via de novo pathway; orotate from (S)-dihydroorotate (quinone route): step 1/1. Catalyzes the conversion of dihydroorotate to orotate with quinone as electron acceptor. The sequence is that of Dihydroorotate dehydrogenase (quinone) from Shewanella baltica (strain OS185).